A 374-amino-acid chain; its full sequence is Chaperone protein DnaJ (374 aa).

The 66-residue stretch at 5-70 (DYYEVLGVNL…RKRASYDQFG (66 aa)) folds into the J domain. The CR-type zinc-finger motif lies at 133-210 (GLSRTIKVPT…CHGQGRQQQT (78 aa)). 8 residues coordinate Zn(2+): cysteine 146, cysteine 149, cysteine 162, cysteine 165, cysteine 184, cysteine 187, cysteine 198, and cysteine 201. CXXCXGXG motif repeat units lie at residues 146 to 153 (CKTCNGSG), 162 to 169 (CPRCNGSG), 184 to 191 (CSVCRGRG), and 198 to 205 (CTDCHGQG).

It belongs to the DnaJ family. As to quaternary structure, homodimer. Requires Zn(2+) as cofactor.

It is found in the cytoplasm. Functionally, participates actively in the response to hyperosmotic and heat shock by preventing the aggregation of stress-denatured proteins and by disaggregating proteins, also in an autonomous, DnaK-independent fashion. Unfolded proteins bind initially to DnaJ; upon interaction with the DnaJ-bound protein, DnaK hydrolyzes its bound ATP, resulting in the formation of a stable complex. GrpE releases ADP from DnaK; ATP binding to DnaK triggers the release of the substrate protein, thus completing the reaction cycle. Several rounds of ATP-dependent interactions between DnaJ, DnaK and GrpE are required for fully efficient folding. Also involved, together with DnaK and GrpE, in the DNA replication of plasmids through activation of initiation proteins. In Coxiella burnetii (strain RSA 331 / Henzerling II), this protein is Chaperone protein DnaJ.